The following is an 83-amino-acid chain: MNNNAQPDVSALSFEQAVEELERIVSALERGDVALDKSIEIYERGEALKKHCEALLKAAEDRIEKIRLDRAGRPQGVEPLDAE.

Belongs to the XseB family. Heterooligomer composed of large and small subunits.

It is found in the cytoplasm. The catalysed reaction is Exonucleolytic cleavage in either 5'- to 3'- or 3'- to 5'-direction to yield nucleoside 5'-phosphates.. Functionally, bidirectionally degrades single-stranded DNA into large acid-insoluble oligonucleotides, which are then degraded further into small acid-soluble oligonucleotides. In Rhizobium meliloti (strain 1021) (Ensifer meliloti), this protein is Exodeoxyribonuclease 7 small subunit.